Here is a 222-residue protein sequence, read N- to C-terminus: Sugar fermentation stimulation protein homolog (222 aa).

Belongs to the SfsA family.

The chain is Sugar fermentation stimulation protein homolog from Thermotoga maritima (strain ATCC 43589 / DSM 3109 / JCM 10099 / NBRC 100826 / MSB8).